The chain runs to 466 residues: Ribosomal protein uS12 methylthiotransferase RimO (466 aa).

Residues 31–141 form the MTTase N-terminal domain; that stretch reads PTIGMVSLGC…VLDAVHGAVP (111 aa). 6 residues coordinate [4Fe-4S] cluster: cysteine 40, cysteine 76, cysteine 105, cysteine 172, cysteine 176, and cysteine 179. A Radical SAM core domain is found at 158-397; sequence LTPRHYSYLK…MAKAQAISEA (240 aa). Positions 400 to 466 constitute a TRAM domain; it reads AARVGQVIEV…GEYDLWGRLR (67 aa).

This sequence belongs to the methylthiotransferase family. RimO subfamily. The cofactor is [4Fe-4S] cluster.

It is found in the cytoplasm. The enzyme catalyses L-aspartate(89)-[ribosomal protein uS12]-hydrogen + (sulfur carrier)-SH + AH2 + 2 S-adenosyl-L-methionine = 3-methylsulfanyl-L-aspartate(89)-[ribosomal protein uS12]-hydrogen + (sulfur carrier)-H + 5'-deoxyadenosine + L-methionine + A + S-adenosyl-L-homocysteine + 2 H(+). Catalyzes the methylthiolation of an aspartic acid residue of ribosomal protein uS12. The chain is Ribosomal protein uS12 methylthiotransferase RimO from Ruegeria pomeroyi (strain ATCC 700808 / DSM 15171 / DSS-3) (Silicibacter pomeroyi).